The primary structure comprises 425 residues: Serine--tRNA ligase (425 aa).

229-231 (TSE) serves as a coordination point for L-serine. ATP-binding positions include 259-261 (RKE) and Val-275. Glu-282 contributes to the L-serine binding site. 349 to 352 (EVTS) is a binding site for ATP. Thr-384 provides a ligand contact to L-serine.

It belongs to the class-II aminoacyl-tRNA synthetase family. Type-1 seryl-tRNA synthetase subfamily. Homodimer. The tRNA molecule binds across the dimer.

It localises to the cytoplasm. The catalysed reaction is tRNA(Ser) + L-serine + ATP = L-seryl-tRNA(Ser) + AMP + diphosphate + H(+). It catalyses the reaction tRNA(Sec) + L-serine + ATP = L-seryl-tRNA(Sec) + AMP + diphosphate + H(+). It functions in the pathway aminoacyl-tRNA biosynthesis; selenocysteinyl-tRNA(Sec) biosynthesis; L-seryl-tRNA(Sec) from L-serine and tRNA(Sec): step 1/1. Catalyzes the attachment of serine to tRNA(Ser). Is also able to aminoacylate tRNA(Sec) with serine, to form the misacylated tRNA L-seryl-tRNA(Sec), which will be further converted into selenocysteinyl-tRNA(Sec). This is Serine--tRNA ligase from Borrelia garinii subsp. bavariensis (strain ATCC BAA-2496 / DSM 23469 / PBi) (Borreliella bavariensis).